The sequence spans 177 residues: MILSDKTILDYIKSSKIIVEPFDESSLQCSSLDLRLSNSIAFYEELDIIDIKSPIQAKTVTFEEYFIINPGEFLLASTMEYIKLPEFITAFVEGRSSLGRLGLFIENAGWVDAGFEGQITLELYNANKYPIKLYKGMRICQLVFAKLDEIPSKVYRGKYLCQKGATPSKIFMDFDKK.

DCTP-binding positions include 95–100 (RSSLGR), D112, 120–122 (TLE), Q141, Y155, and Q162. E122 (proton donor/acceptor) is an active-site residue.

Belongs to the dCTP deaminase family. As to quaternary structure, homotrimer.

It catalyses the reaction dCTP + 2 H2O = dUMP + NH4(+) + diphosphate. It participates in pyrimidine metabolism; dUMP biosynthesis; dUMP from dCTP: step 1/1. Functionally, bifunctional enzyme that catalyzes both the deamination of dCTP to dUTP and the hydrolysis of dUTP to dUMP without releasing the toxic dUTP intermediate. In Hydrogenobaculum sp. (strain Y04AAS1), this protein is dCTP deaminase, dUMP-forming.